Consider the following 303-residue polypeptide: UDP-N-acetylenolpyruvoylglucosamine reductase (303 aa).

In terms of domain architecture, FAD-binding PCMH-type spans Lys30–Gly195. Residue Arg174 is part of the active site. Ser224 acts as the Proton donor in catalysis. Residue Glu294 is part of the active site.

It belongs to the MurB family. It depends on FAD as a cofactor.

Its subcellular location is the cytoplasm. It catalyses the reaction UDP-N-acetyl-alpha-D-muramate + NADP(+) = UDP-N-acetyl-3-O-(1-carboxyvinyl)-alpha-D-glucosamine + NADPH + H(+). It participates in cell wall biogenesis; peptidoglycan biosynthesis. In terms of biological role, cell wall formation. The polypeptide is UDP-N-acetylenolpyruvoylglucosamine reductase (Latilactobacillus sakei subsp. sakei (strain 23K) (Lactobacillus sakei subsp. sakei)).